The primary structure comprises 571 residues: Proline--tRNA ligase (571 aa).

Belongs to the class-II aminoacyl-tRNA synthetase family. ProS type 1 subfamily. Homodimer.

The protein resides in the cytoplasm. It catalyses the reaction tRNA(Pro) + L-proline + ATP = L-prolyl-tRNA(Pro) + AMP + diphosphate. Functionally, catalyzes the attachment of proline to tRNA(Pro) in a two-step reaction: proline is first activated by ATP to form Pro-AMP and then transferred to the acceptor end of tRNA(Pro). As ProRS can inadvertently accommodate and process non-cognate amino acids such as alanine and cysteine, to avoid such errors it has two additional distinct editing activities against alanine. One activity is designated as 'pretransfer' editing and involves the tRNA(Pro)-independent hydrolysis of activated Ala-AMP. The other activity is designated 'posttransfer' editing and involves deacylation of mischarged Ala-tRNA(Pro). The misacylated Cys-tRNA(Pro) is not edited by ProRS. The chain is Proline--tRNA ligase from Pseudomonas entomophila (strain L48).